A 100-amino-acid chain; its full sequence is MKWLAIILVVALLALQYRLWMGEGSIASVVSLNREIAKQKEENARLRERNRLLAAEVDALKQGKDAIEERARNDMGMIKEGETFFMIVDETDKDTKKNKK.

The Cytoplasmic portion of the chain corresponds to 1–3 (MKW). A helical membrane pass occupies residues 4-21 (LAIILVVALLALQYRLWM). The Periplasmic portion of the chain corresponds to 22-100 (GEGSIASVVS…TDKDTKKNKK (79 aa)). The stretch at 26 to 73 (IASVVSLNREIAKQKEENARLRERNRLLAAEVDALKQGKDAIEERARN) forms a coiled coil.

The protein belongs to the FtsB family. In terms of assembly, part of a complex composed of FtsB, FtsL and FtsQ.

The protein resides in the cell inner membrane. Functionally, essential cell division protein. May link together the upstream cell division proteins, which are predominantly cytoplasmic, with the downstream cell division proteins, which are predominantly periplasmic. The protein is Cell division protein FtsB of Saccharophagus degradans (strain 2-40 / ATCC 43961 / DSM 17024).